The primary structure comprises 285 residues: Bifunctional protein FolD (285 aa).

NADP(+) is bound by residues 165–167, Thr-192, and Val-233; that span reads GRG.

This sequence belongs to the tetrahydrofolate dehydrogenase/cyclohydrolase family. Homodimer.

It catalyses the reaction (6R)-5,10-methylene-5,6,7,8-tetrahydrofolate + NADP(+) = (6R)-5,10-methenyltetrahydrofolate + NADPH. The enzyme catalyses (6R)-5,10-methenyltetrahydrofolate + H2O = (6R)-10-formyltetrahydrofolate + H(+). The protein operates within one-carbon metabolism; tetrahydrofolate interconversion. Catalyzes the oxidation of 5,10-methylenetetrahydrofolate to 5,10-methenyltetrahydrofolate and then the hydrolysis of 5,10-methenyltetrahydrofolate to 10-formyltetrahydrofolate. This chain is Bifunctional protein FolD, found in Mycobacterium sp. (strain MCS).